Consider the following 453-residue polypeptide: Carbamoyl phosphate synthase arginine-specific small chain (453 aa).

Residues Met1 to Gly33 constitute a mitochondrion transit peptide. Residues Leu26 to Ala50 form a disordered region. 3 residues coordinate L-glutamine: Ser97, Gly280, and Gly282. The 188-residue stretch at His233–Asn420 folds into the Glutamine amidotransferase type-1 domain. The active-site Nucleophile is Cys309. The L-glutamine site is built by Leu310, Gln313, Asn351, Gly353, and Tyr354. Catalysis depends on residues His393 and Glu395.

Belongs to the CarA family. Heterodimer composed of 2 chains; the small (or glutamine) chain promotes the hydrolysis of glutamine to ammonia, which is used by the large (or ammonia) chain to synthesize carbamoyl phosphate.

It is found in the mitochondrion matrix. The enzyme catalyses hydrogencarbonate + L-glutamine + 2 ATP + H2O = carbamoyl phosphate + L-glutamate + 2 ADP + phosphate + 2 H(+). It catalyses the reaction L-glutamine + H2O = L-glutamate + NH4(+). Its pathway is amino-acid biosynthesis; L-arginine biosynthesis; carbamoyl phosphate from bicarbonate: step 1/1. In terms of biological role, small subunit of the arginine-specific carbamoyl phosphate synthase (CPSase). CPSase catalyzes the formation of carbamoyl phosphate from the ammonia moiety of glutamine, carbonate, and phosphate donated by ATP, the first step of the arginine biosynthetic pathway. The small subunit (glutamine amidotransferase) binds and cleaves glutamine to supply the large subunit with the substrate ammonia. The polypeptide is Carbamoyl phosphate synthase arginine-specific small chain (arg-2) (Neurospora crassa (strain ATCC 24698 / 74-OR23-1A / CBS 708.71 / DSM 1257 / FGSC 987)).